The chain runs to 56 residues: Protein hunchback (56 aa).

3 C2H2-type zinc fingers span residues 1–5 (HLRNH), 11–33 (FKCDKCSYSCVNKSMLNSHLKSH), and 39–56 (FRCSDCAYATKYCHSLKL).

This sequence belongs to the hunchback C2H2-type zinc-finger protein family.

It is found in the nucleus. Gap class segmentation protein that controls development of head structures. The sequence is that of Protein hunchback (hb) from Euscelis plebejus (Leafhopper).